Reading from the N-terminus, the 510-residue chain is MIWHVQNENFILDSTRIFMKAFHLLLFDGSLIFPECILIFGLILLLMIDSTSDQKDIPWLYFISSTSLVMSITALLFRWREEPMISFSGNFQTNNFNEIFQFLILLCSTLCIPLSVEYIECTEMAITEFLLFILTATLGGMFLCGANDLITIFVAPECFSLCSYLLSGYTKKDVRSNEATTKYLLMGGASSSILVHGFSWLYGSSGGEIELQEIVNGLINTQMYNSPGISIALIFITVGIGFKLSPAPSHQWTPDVYEGSPTPVVAFLSVTSKVAASASATRIFDIPFYFSSNEWHLLLEILAILSMILGNLIAITQTSMKRMLAYSSIGQIGYVIIGIIVGDSNGGYASMITYMLFYISMNLGTFACIVSFGLRTGTDNIRDYAGLYTKDPFLALSLALCLLSLGGLPPLAGFFGKLHLFWCGWQAGLYFLVSIGLLTSVLSIYYYLKIIKLLMTGRNQEITPHVRNYRRSPLRSNNSIELSMIVCVIASTIPGISMNPIIAIAQDTLF.

The next 13 membrane-spanning stretches (helical) occupy residues 24 to 44 (LLLF…GLIL), 57 to 77 (IPWL…ALLF), 99 to 119 (IFQF…VEYI), 124 to 144 (MAIT…MFLC), 149 to 169 (LITI…LSGY), 183 to 203 (YLLM…WLYG), 227 to 247 (PGIS…LSPA), 295 to 315 (WHLL…LIAI), 323 to 343 (MLAY…IVGD), 354 to 374 (YMLF…SFGL), 395 to 415 (ALSL…AGFF), 418 to 438 (LHLF…IGLL), and 484 to 504 (MIVC…IIAI).

Belongs to the complex I subunit 2 family. As to quaternary structure, NDH is composed of at least 16 different subunits, 5 of which are encoded in the nucleus.

It localises to the plastid. It is found in the chloroplast thylakoid membrane. The enzyme catalyses a plastoquinone + NADH + (n+1) H(+)(in) = a plastoquinol + NAD(+) + n H(+)(out). It catalyses the reaction a plastoquinone + NADPH + (n+1) H(+)(in) = a plastoquinol + NADP(+) + n H(+)(out). Functionally, NDH shuttles electrons from NAD(P)H:plastoquinone, via FMN and iron-sulfur (Fe-S) centers, to quinones in the photosynthetic chain and possibly in a chloroplast respiratory chain. The immediate electron acceptor for the enzyme in this species is believed to be plastoquinone. Couples the redox reaction to proton translocation, and thus conserves the redox energy in a proton gradient. In Carica papaya (Papaya), this protein is NAD(P)H-quinone oxidoreductase subunit 2 A, chloroplastic.